A 220-amino-acid chain; its full sequence is Iron-sulfur cluster repair protein YtfE (220 aa).

Belongs to the RIC family. YtfE subfamily. As to quaternary structure, homodimer.

It is found in the cytoplasm. In terms of biological role, di-iron-containing protein involved in the repair of iron-sulfur clusters damaged by oxidative and nitrosative stress conditions. In Escherichia coli O81 (strain ED1a), this protein is Iron-sulfur cluster repair protein YtfE.